The following is a 997-amino-acid chain: Kinesin-like protein KIF19 (997 aa).

The region spanning 11 to 346 (QLTVALRIRP…LTYADRAKNI (336 aa)) is the Kinesin motor domain. Position 104–111 (104–111 (GPTGCGKT)) interacts with ATP. The stretch at 360 to 437 (HIAQYTSIIS…REQMDIRRQL (78 aa)) forms a coiled coil. A compositionally biased stretch (basic and acidic residues) spans 468 to 491 (RARKWRDEHRKETYGKDDSEKDSD). Residues 468 to 503 (RARKWRDEHRKETYGKDDSEKDSDTGDDQSDFIEPP) form a disordered region. Residues 508 to 577 (ARETIQILEG…ELEIENTEMQ (70 aa)) are a coiled coil. 3 disordered regions span residues 662-690 (NLTA…RNPI), 792-811 (GDRL…SMSE), and 848-890 (GGGS…SRSF). 2 stretches are compositionally biased toward basic and acidic residues: residues 792–802 (GDRLQPMKERS) and 869–880 (QKLEKREESLEV). Residues 861-889 (HRTQKKQAQKLEKREESLEVKRRKKRSRS) are a coiled coil.

This sequence belongs to the TRAFAC class myosin-kinesin ATPase superfamily. Kinesin family.

Its subcellular location is the cytoplasm. The protein resides in the cytoskeleton. It localises to the cell projection. It is found in the cilium. Its function is as follows. Plus end-directed microtubule-dependent motor protein that regulates the length of motile cilia by mediating depolymerization of microtubules at ciliary tips. This Xenopus laevis (African clawed frog) protein is Kinesin-like protein KIF19 (kif19).